A 360-amino-acid polypeptide reads, in one-letter code: Phospho-N-acetylmuramoyl-pentapeptide-transferase (360 aa).

Transmembrane regions (helical) follow at residues 26 to 46, 70 to 90, 97 to 117, 132 to 152, 168 to 188, 199 to 219, 236 to 256, 263 to 283, 288 to 308, and 338 to 358; these read TILGVLTALGIALLVGPAVIQ, GTPTMGGALILVAIAVATLLW, YVWVVLLTTLAFGVIGGVDDY, AKFFWQTVVALMAAVFLFSTA, VVLPLGLLFIPLVWLVVVGSS, GLAILPSVLVAGGLAVFAYAT, AGEVVVFCGALIGAGLGFLWF, VFMGDVGALALGAALGILAVV, LVLLIMGGVFVVETLSVMLQV, and VIVRFWIITVVLVLVGLAMLK.

It belongs to the glycosyltransferase 4 family. MraY subfamily. The cofactor is Mg(2+).

It is found in the cell inner membrane. It carries out the reaction UDP-N-acetyl-alpha-D-muramoyl-L-alanyl-gamma-D-glutamyl-meso-2,6-diaminopimeloyl-D-alanyl-D-alanine + di-trans,octa-cis-undecaprenyl phosphate = di-trans,octa-cis-undecaprenyl diphospho-N-acetyl-alpha-D-muramoyl-L-alanyl-D-glutamyl-meso-2,6-diaminopimeloyl-D-alanyl-D-alanine + UMP. Its pathway is cell wall biogenesis; peptidoglycan biosynthesis. Catalyzes the initial step of the lipid cycle reactions in the biosynthesis of the cell wall peptidoglycan: transfers peptidoglycan precursor phospho-MurNAc-pentapeptide from UDP-MurNAc-pentapeptide onto the lipid carrier undecaprenyl phosphate, yielding undecaprenyl-pyrophosphoryl-MurNAc-pentapeptide, known as lipid I. The sequence is that of Phospho-N-acetylmuramoyl-pentapeptide-transferase from Alkalilimnicola ehrlichii (strain ATCC BAA-1101 / DSM 17681 / MLHE-1).